The primary structure comprises 338 residues: Ketol-acid reductoisomerase (NADP(+)) (338 aa).

In terms of domain architecture, KARI N-terminal Rossmann spans 1–181; it reads MRVYYDKDCD…GGGRSGIIET (181 aa). NADP(+)-binding positions include 24–27, Arg-47, Ser-50, Ser-52, and 82–85; these read YGSQ and DENQ. Residue His-107 is part of the active site. Gly-133 is a binding site for NADP(+). A KARI C-terminal knotted domain is found at 182 to 327; the sequence is TFKDETETDL…EKLRGMMPWI (146 aa). Positions 190, 194, 226, and 230 each coordinate Mg(2+). Residue Ser-251 participates in substrate binding.

It belongs to the ketol-acid reductoisomerase family. Requires Mg(2+) as cofactor.

The catalysed reaction is (2R)-2,3-dihydroxy-3-methylbutanoate + NADP(+) = (2S)-2-acetolactate + NADPH + H(+). The enzyme catalyses (2R,3R)-2,3-dihydroxy-3-methylpentanoate + NADP(+) = (S)-2-ethyl-2-hydroxy-3-oxobutanoate + NADPH + H(+). It functions in the pathway amino-acid biosynthesis; L-isoleucine biosynthesis; L-isoleucine from 2-oxobutanoate: step 2/4. The protein operates within amino-acid biosynthesis; L-valine biosynthesis; L-valine from pyruvate: step 2/4. Involved in the biosynthesis of branched-chain amino acids (BCAA). Catalyzes an alkyl-migration followed by a ketol-acid reduction of (S)-2-acetolactate (S2AL) to yield (R)-2,3-dihydroxy-isovalerate. In the isomerase reaction, S2AL is rearranged via a Mg-dependent methyl migration to produce 3-hydroxy-3-methyl-2-ketobutyrate (HMKB). In the reductase reaction, this 2-ketoacid undergoes a metal-dependent reduction by NADPH to yield (R)-2,3-dihydroxy-isovalerate. In Chromohalobacter salexigens (strain ATCC BAA-138 / DSM 3043 / CIP 106854 / NCIMB 13768 / 1H11), this protein is Ketol-acid reductoisomerase (NADP(+)).